The following is a 414-amino-acid chain: Serine hydroxymethyltransferase (414 aa).

(6S)-5,6,7,8-tetrahydrofolate contacts are provided by residues L121 and 125–127 (GHL). Residue K230 is modified to N6-(pyridoxal phosphate)lysine.

It belongs to the SHMT family. In terms of assembly, homodimer. Pyridoxal 5'-phosphate is required as a cofactor.

The protein resides in the cytoplasm. The enzyme catalyses (6R)-5,10-methylene-5,6,7,8-tetrahydrofolate + glycine + H2O = (6S)-5,6,7,8-tetrahydrofolate + L-serine. It participates in one-carbon metabolism; tetrahydrofolate interconversion. It functions in the pathway amino-acid biosynthesis; glycine biosynthesis; glycine from L-serine: step 1/1. In terms of biological role, catalyzes the reversible interconversion of serine and glycine with tetrahydrofolate (THF) serving as the one-carbon carrier. This reaction serves as the major source of one-carbon groups required for the biosynthesis of purines, thymidylate, methionine, and other important biomolecules. Also exhibits THF-independent aldolase activity toward beta-hydroxyamino acids, producing glycine and aldehydes, via a retro-aldol mechanism. This is Serine hydroxymethyltransferase from Acidithiobacillus ferrooxidans (strain ATCC 23270 / DSM 14882 / CIP 104768 / NCIMB 8455) (Ferrobacillus ferrooxidans (strain ATCC 23270)).